Reading from the N-terminus, the 170-residue chain is Peptide deformylase (170 aa).

Fe cation-binding residues include C91 and H133. E134 is an active-site residue. H137 is a Fe cation binding site.

The protein belongs to the polypeptide deformylase family. The cofactor is Fe(2+).

The enzyme catalyses N-terminal N-formyl-L-methionyl-[peptide] + H2O = N-terminal L-methionyl-[peptide] + formate. In terms of biological role, removes the formyl group from the N-terminal Met of newly synthesized proteins. Requires at least a dipeptide for an efficient rate of reaction. N-terminal L-methionine is a prerequisite for activity but the enzyme has broad specificity at other positions. The protein is Peptide deformylase of Glaesserella parasuis serovar 5 (strain SH0165) (Haemophilus parasuis).